The sequence spans 900 residues: Polycomb protein Su(z)12 (900 aa).

Over residues 1-12 (MAPAKKREKDSN) the composition is skewed to basic and acidic residues. The tract at residues 1–44 (MAPAKKREKDSNPDGSAANGIIGLTHGAPDASNAGSTVPPTAEG) is disordered. The segment at 411–434 (LNCPWCGLDCLRLYALLKHLKLCH) adopts a C2H2-type zinc-finger fold. Positions 527–603 (RLYHHTETCL…CQLPIACEMF (77 aa)) are VEFS-box. Ser547 is modified (phosphoserine). Residues 678–900 (KQEDPKTLKS…LSVPAKYERR (223 aa)) form a disordered region. 2 stretches are compositionally biased toward low complexity: residues 698-714 (ASTS…GSSS) and 738-757 (SKGT…NSKN). Positions 773 to 782 (TRERRSEYGQ) are enriched in basic and acidic residues. The segment covering 820–834 (PGTGIGNGHGGGSGS) has biased composition (gly residues). Positions 850–862 (SNNASSSSSNSKR) are enriched in low complexity.

It belongs to the VEFS (VRN2-EMF2-FIS2-SU(Z)12) family. In terms of assembly, component of the polycomb repressive complex 2 (PRC2, also known as the Esc/E(Z) complex), composed of Caf1-55, esc, E(z), Su(z)12, and possibly pho. PRC2 associates with the accessory components Jarid2 and jing to form the PRC2 Jarid2-jing variant (PRC2.2). PRC2 may also associate with Pcl and HDAC1/Rpd3 during early embryogenesis. This complex is distinct from the PRC1 complex, which contains many other PcG proteins like Pc, Ph, Psc, Su(z)2. The two complexes however cooperate and interact together during the first 3 hours of development to establish PcG silencing.

The protein resides in the nucleus. It localises to the chromosome. In terms of biological role, polycomb group (PcG) protein. While PcG proteins are generally required to maintain the transcriptionally repressive state of homeotic genes throughout development, this protein is specifically required during the first 6 hours of embryogenesis to establish the repressed state. Component of the Esc/E(z) complex, which methylates 'Lys-9' (H3K9me) and 'Lys-27' (H3K27me) of histone H3, leading to transcriptional repression of the affected target gene. The Esc/E(z) complex is necessary but not sufficient for the repression of homeotic target genes, suggesting that the recruitment of the distinct PRC1 complex is also required. In Drosophila melanogaster (Fruit fly), this protein is Polycomb protein Su(z)12 (Su(z)12).